We begin with the raw amino-acid sequence, 304 residues long: Phospholipase A1 (304 aa).

An intrachain disulfide couples C6 to C90. N61 carries an N-linked (GlcNAc...) asparagine glycan. The active-site Nucleophile is the S140. The active-site Charge relay system is D168. Intrachain disulfides connect C179–C184 and C222–C231. H233 acts as the Charge relay system in catalysis. 3 disulfides stabilise this stretch: C248–C272, C249–C297, and C265–C270.

Belongs to the AB hydrolase superfamily. Lipase family. As to expression, expressed by the venom gland.

The protein resides in the secreted. It carries out the reaction a 1,2-diacyl-sn-glycero-3-phosphocholine + H2O = a 2-acyl-sn-glycero-3-phosphocholine + a fatty acid + H(+). Catalyzes the hydrolysis of phosphatidylcholine with phospholipase A1 activity. May act as an allergen and induce hemolytic activity. The sequence is that of Phospholipase A1 from Vespa velutina (Asian yellow-legged hornet).